We begin with the raw amino-acid sequence, 463 residues long: Glycine--tRNA ligase (463 aa).

Residues Arg-98 and Glu-174 each coordinate substrate. Residues 206-208, 216-221, 290-291, and 334-337 contribute to the ATP site; these read RNE, FRTREF, EL, and GADR. 221–225 contacts substrate; sequence FEQME. 330 to 334 contacts substrate; sequence EPSLG.

The protein belongs to the class-II aminoacyl-tRNA synthetase family. In terms of assembly, homodimer.

The protein localises to the cytoplasm. The catalysed reaction is tRNA(Gly) + glycine + ATP = glycyl-tRNA(Gly) + AMP + diphosphate. Functionally, catalyzes the attachment of glycine to tRNA(Gly). The protein is Glycine--tRNA ligase of Staphylococcus aureus (strain Mu50 / ATCC 700699).